The chain runs to 376 residues: MRITVSAIKADVGGIGGHTLPSSGLLDAVRRKVSSSSLLIDHYIGYCGDDVHIVMTHTRGTDNSDIHKLAWDAFMEGTRVAKEEGLYGAGQDLLRDSFSGNVKGMGPGVAELEFEERANEAFTVFAADKTEPGAFNYPFYRMFVDSLSNTGLIVNKSLAEGVVINIMDVSKARTARLVLWEDKPTIEAALMYPGRFVVSSVETRDGEPIASASTDRLHNIAGTYVGKDDPICLVRTQKRFPATEEAGSCFNNPHYVAGNTRGSHHMPLMPVRLNSPASINFCIPIVEALVFSMHEGRLTGPFDGFSTPDWDDVRRTATRRAHAMRRQGFVHPATLVPDELEYAEGYRSRMDVLDSKMVPLKDSGPAGTGRAYEDPD.

Asp11 serves as the catalytic Proton acceptor; for FBP phosphatase activity. Residues Asp11, His18, Asp49, and Asp50 each contribute to the Mg(2+) site. Position 18 (His18) interacts with beta-D-fructose 1,6-bisphosphate. His18 provides a ligand contact to dihydroxyacetone phosphate. Tyr87 is a binding site for beta-D-fructose 1,6-bisphosphate. Gln91 is a Mg(2+) binding site. 100-101 (GN) provides a ligand contact to beta-D-fructose 1,6-bisphosphate. Asp128 provides a ligand contact to Mg(2+). Lys129 contributes to the beta-D-fructose 1,6-bisphosphate binding site. Lys129 is a binding site for dihydroxyacetone phosphate. Tyr224 (proton donor/acceptor; for FBP aldolase activity) is an active-site residue. Residues Lys227, Asp228, and Asp229 each coordinate Mg(2+). Catalysis depends on Lys227, which acts as the Schiff-base intermediate with DHAP; for FBP aldolase activity. Residues 237 to 238 (QK), Arg261, and Tyr342 each bind beta-D-fructose 1,6-bisphosphate. Dihydroxyacetone phosphate is bound at residue Arg261. The disordered stretch occupies residues 357-376 (MVPLKDSGPAGTGRAYEDPD).

It belongs to the FBP aldolase/phosphatase family. As to quaternary structure, homooctamer; dimer of tetramers. It depends on Mg(2+) as a cofactor.

It carries out the reaction beta-D-fructose 1,6-bisphosphate + H2O = beta-D-fructose 6-phosphate + phosphate. The catalysed reaction is beta-D-fructose 1,6-bisphosphate = D-glyceraldehyde 3-phosphate + dihydroxyacetone phosphate. Its pathway is carbohydrate biosynthesis; gluconeogenesis. In terms of biological role, catalyzes two subsequent steps in gluconeogenesis: the aldol condensation of dihydroxyacetone phosphate (DHAP) and glyceraldehyde-3-phosphate (GA3P) to fructose-1,6-bisphosphate (FBP), and the dephosphorylation of FBP to fructose-6-phosphate (F6P). In Cenarchaeum symbiosum (strain A), this protein is Fructose-1,6-bisphosphate aldolase/phosphatase.